The following is a 396-amino-acid chain: Elongation factor Tu 1 (396 aa).

In terms of domain architecture, tr-type G spans lysine 10–glutamate 206. A G1 region spans residues glycine 19–threonine 26. Glycine 19–threonine 26 contacts GTP. Threonine 26 serves as a coordination point for Mg(2+). Residues glycine 60–serine 64 are G2. Positions aspartate 81 to glycine 84 are G3. GTP-binding positions include aspartate 81–histidine 85 and asparagine 136–aspartate 139. The segment at asparagine 136–aspartate 139 is G4. The G5 stretch occupies residues serine 174 to leucine 176.

This sequence belongs to the TRAFAC class translation factor GTPase superfamily. Classic translation factor GTPase family. EF-Tu/EF-1A subfamily. Monomer.

The protein resides in the cytoplasm. It catalyses the reaction GTP + H2O = GDP + phosphate + H(+). In terms of biological role, GTP hydrolase that promotes the GTP-dependent binding of aminoacyl-tRNA to the A-site of ribosomes during protein biosynthesis. The sequence is that of Elongation factor Tu 1 from Rhodospirillum rubrum (strain ATCC 11170 / ATH 1.1.1 / DSM 467 / LMG 4362 / NCIMB 8255 / S1).